A 276-amino-acid polypeptide reads, in one-letter code: Malectin-B (276 aa).

The N-terminal stretch at 1–26 (MLSIRTVLGPLAAILLTVIGPFGAHG) is a signal peptide. The Lumenal portion of the chain corresponds to 27–253 (SGLADKVMWA…TPNPYASDNS (227 aa)). Positions 67, 89, 116, 117, and 186 each coordinate a carbohydrate. The segment at 202 to 249 (DVPQLQPHPGLEKKEEEEEEEEEEGSPSKKQSNKNRVQSGPRTPNPYA) is disordered. The span at 216 to 226 (EEEEEEEEEEG) shows a compositional bias: acidic residues. Over residues 229-249 (SKKQSNKNRVQSGPRTPNPYA) the composition is skewed to polar residues. A glycan (N-linked (GlcNAc...) asparagine) is linked at asparagine 252. Residues 254–274 (SLMFPILVAFGVFIPTLFCLC) traverse the membrane as a helical segment. The Cytoplasmic segment spans residues 275-276 (RL).

This sequence belongs to the malectin family.

The protein resides in the endoplasmic reticulum membrane. Carbohydrate-binding protein with a strong ligand preference for Glc2-N-glycan. May play a role in the early steps of protein N-glycosylation. Can bind di- or higher oligomers but not monomers of glucose, including maltose, maltotriose, maltotetraose, maltoheptaose, nigerose, kojibose, cellobiose and isomaltose, although based on their subcellular locations, these are unlikely to all be physiological ligands. The sequence is that of Malectin-B from Xenopus laevis (African clawed frog).